Reading from the N-terminus, the 80-residue chain is Cell division protein ZapB (80 aa).

Residues 3–80 adopt a coiled-coil conformation; sequence LEILEQLEAK…GLLGKMDEVE (78 aa). The tract at residues 41 to 60 is disordered; it reads LEQANNGRSEVEQEAQRARD. The span at 49 to 60 shows a compositional bias: basic and acidic residues; that stretch reads SEVEQEAQRARD.

Belongs to the ZapB family. As to quaternary structure, homodimer. The ends of the coiled-coil dimer bind to each other, forming polymers. Interacts with FtsZ.

It is found in the cytoplasm. In terms of biological role, non-essential, abundant cell division factor that is required for proper Z-ring formation. It is recruited early to the divisome by direct interaction with FtsZ, stimulating Z-ring assembly and thereby promoting cell division earlier in the cell cycle. Its recruitment to the Z-ring requires functional FtsA or ZipA. The protein is Cell division protein ZapB of Aliivibrio fischeri (strain ATCC 700601 / ES114) (Vibrio fischeri).